A 93-amino-acid chain; its full sequence is NAD(P)H-quinone oxidoreductase subunit 4L, chloroplastic (93 aa).

A run of 2 helical transmembrane segments spans residues methionine 1 to isoleucine 21 and isoleucine 60 to alanine 80.

The protein belongs to the complex I subunit 4L family. As to quaternary structure, NDH is composed of at least 16 different subunits, 5 of which are encoded in the nucleus.

It localises to the plastid. The protein resides in the chloroplast thylakoid membrane. The enzyme catalyses a plastoquinone + NADH + (n+1) H(+)(in) = a plastoquinol + NAD(+) + n H(+)(out). It catalyses the reaction a plastoquinone + NADPH + (n+1) H(+)(in) = a plastoquinol + NADP(+) + n H(+)(out). NDH shuttles electrons from NAD(P)H:plastoquinone, via FMN and iron-sulfur (Fe-S) centers, to quinones in the photosynthetic chain and possibly in a chloroplast respiratory chain. The immediate electron acceptor for the enzyme in this species is believed to be plastoquinone. Couples the redox reaction to proton translocation, and thus conserves the redox energy in a proton gradient. The protein is NAD(P)H-quinone oxidoreductase subunit 4L, chloroplastic of Anthoceros angustus (Hornwort).